The following is a 560-amino-acid chain: Nitrite reductase (560 aa).

The N-terminal stretch at 1–26 (MSNVGKPILAGLIAGLSLLGLAVAQA) is a signal peptide. Residues 27 to 29 (AAP) form an N-terminal tail region. Positions 30-126 (EMTAEEKEAS…ARYIQHTPDI (97 aa)) constitute a Cytochrome c domain. Residues cysteine 47, cysteine 50, and histidine 51 each coordinate heme c. Residues 61–80 (KNLEPHWSKTEADGKKTEGG) form a disordered region. Positions 63-78 (LEPHWSKTEADGKKTE) are enriched in basic and acidic residues. 2 residues coordinate heme c: threonine 97 and methionine 101. Residues 127 to 560 (PPEFSLQDMK…NVFNTMNDVY (434 aa)) are D1-heme domain. The heme d1 site is built by histidine 193, arginine 236, serine 237, tyrosine 256, arginine 382, and glutamine 500.

In terms of assembly, homodimer in solution. The cofactor is heme c. Requires heme as cofactor.

It is found in the periplasm. The enzyme catalyses nitric oxide + Fe(III)-[cytochrome c] + H2O = Fe(II)-[cytochrome c] + nitrite + 2 H(+). It carries out the reaction A + NH4(+) + H2O = hydroxylamine + AH2 + H(+). In Stutzerimonas stutzeri (Pseudomonas stutzeri), this protein is Nitrite reductase (nirS).